Here is a 369-residue protein sequence, read N- to C-terminus: UDP-N-acetylglucosamine--N-acetylmuramyl-(pentapeptide) pyrophosphoryl-undecaprenol N-acetylglucosamine transferase (369 aa).

UDP-N-acetyl-alpha-D-glucosamine contacts are provided by residues 10 to 12 (TGG), asparagine 124, arginine 166, serine 196, and glutamine 300.

Belongs to the glycosyltransferase 28 family. MurG subfamily.

The protein localises to the cell membrane. It carries out the reaction di-trans,octa-cis-undecaprenyl diphospho-N-acetyl-alpha-D-muramoyl-L-alanyl-D-glutamyl-meso-2,6-diaminopimeloyl-D-alanyl-D-alanine + UDP-N-acetyl-alpha-D-glucosamine = di-trans,octa-cis-undecaprenyl diphospho-[N-acetyl-alpha-D-glucosaminyl-(1-&gt;4)]-N-acetyl-alpha-D-muramoyl-L-alanyl-D-glutamyl-meso-2,6-diaminopimeloyl-D-alanyl-D-alanine + UDP + H(+). Its pathway is cell wall biogenesis; peptidoglycan biosynthesis. Functionally, cell wall formation. Catalyzes the transfer of a GlcNAc subunit on undecaprenyl-pyrophosphoryl-MurNAc-pentapeptide (lipid intermediate I) to form undecaprenyl-pyrophosphoryl-MurNAc-(pentapeptide)GlcNAc (lipid intermediate II). The polypeptide is UDP-N-acetylglucosamine--N-acetylmuramyl-(pentapeptide) pyrophosphoryl-undecaprenol N-acetylglucosamine transferase (Desulfitobacterium hafniense (strain Y51)).